The primary structure comprises 368 residues: POU domain, class 3, transcription factor 1 (368 aa).

The segment covering 1–16 (MATTAQYIPRNNSLPS) has biased composition (polar residues). 4 disordered regions span residues 1–28 (MATT…DRMH), 69–88 (TDWT…ASVQ), 100–134 (SHLV…NGHQ), and 147–193 (SPQP…PSSD). A compositionally biased stretch (basic and acidic residues) spans 79–88 (QAEHNKASVQ). Residues 105-134 (QPTQNSHHGSWAPTTTHHLSPLSPASNGHQ) are compositionally biased toward polar residues. Residues 155-170 (GLRDPLHDDAGSHDNQ) show a composition bias toward basic and acidic residues. The region spanning 187–261 (EDAPSSDDLE…LLNKWLEETD (75 aa)) is the POU-specific domain. Positions 279 to 338 (KRKKRTSIEVGVKGALENHFLKCPKPSAHEITTLAGTLQLEKEVVRVWFCNRRQKEKRMT) form a DNA-binding region, homeobox.

It belongs to the POU transcription factor family. Class-3 subfamily. In terms of tissue distribution, predominantly expressed in the embryonic and adult central nervous system.

The protein localises to the nucleus. Functionally, transcription factor that may play important roles in patterning the embryonic brain. Could directly respond to the reception of the sonic hedgehog (shh) signal. This Danio rerio (Zebrafish) protein is POU domain, class 3, transcription factor 1 (pou3f1).